Consider the following 372-residue polypeptide: Secreted beta-glucosidase SIM1 (372 aa).

The first 15 residues, 1 to 15 (MKYLTLLTVLSTALA), serve as a signal peptide directing secretion. Residues 51 to 85 (VTENASSGASSGETAETIQTRSSSDVSSSSDSNPV) form a disordered region. Positions 52 to 85 (TENASSGASSGETAETIQTRSSSDVSSSSDSNPV) are enriched in low complexity. N-linked (GlcNAc...) asparagine glycosylation is found at Asn54 and Asn351.

It belongs to the SUN family.

Its subcellular location is the secreted. It is found in the cell wall. Cell surface beta-glucosidase involved in cell wall maintenance and cytokinesis. Plays a role redundant to SUN41. This chain is Secreted beta-glucosidase SIM1 (SIM1), found in Candida albicans (strain SC5314 / ATCC MYA-2876) (Yeast).